Here is a 140-residue protein sequence, read N- to C-terminus: Nucleoside diphosphate kinase (140 aa).

6 residues coordinate ATP: K11, F59, R87, T93, R104, and N114. The active-site Pros-phosphohistidine intermediate is the H117.

The protein belongs to the NDK family. As to quaternary structure, homotetramer. Requires Mg(2+) as cofactor.

It is found in the cytoplasm. The enzyme catalyses a 2'-deoxyribonucleoside 5'-diphosphate + ATP = a 2'-deoxyribonucleoside 5'-triphosphate + ADP. It catalyses the reaction a ribonucleoside 5'-diphosphate + ATP = a ribonucleoside 5'-triphosphate + ADP. Major role in the synthesis of nucleoside triphosphates other than ATP. The ATP gamma phosphate is transferred to the NDP beta phosphate via a ping-pong mechanism, using a phosphorylated active-site intermediate. This is Nucleoside diphosphate kinase from Methylocella silvestris (strain DSM 15510 / CIP 108128 / LMG 27833 / NCIMB 13906 / BL2).